We begin with the raw amino-acid sequence, 100 residues long: ATP-dependent Clp protease adapter protein ClpS (100 aa).

The protein belongs to the ClpS family. Binds to the N-terminal domain of the chaperone ClpA.

In terms of biological role, involved in the modulation of the specificity of the ClpAP-mediated ATP-dependent protein degradation. The chain is ATP-dependent Clp protease adapter protein ClpS from Corynebacterium glutamicum (strain R).